A 150-amino-acid chain; its full sequence is Large ribosomal subunit protein bL9 (150 aa).

Belongs to the bacterial ribosomal protein bL9 family.

Binds to the 23S rRNA. The sequence is that of Large ribosomal subunit protein bL9 from Wolinella succinogenes (strain ATCC 29543 / DSM 1740 / CCUG 13145 / JCM 31913 / LMG 7466 / NCTC 11488 / FDC 602W) (Vibrio succinogenes).